We begin with the raw amino-acid sequence, 122 residues long: Large ribosomal subunit protein uL14 (122 aa).

It belongs to the universal ribosomal protein uL14 family. As to quaternary structure, part of the 50S ribosomal subunit. Forms a cluster with proteins L3 and L19. In the 70S ribosome, L14 and L19 interact and together make contacts with the 16S rRNA in bridges B5 and B8.

Functionally, binds to 23S rRNA. Forms part of two intersubunit bridges in the 70S ribosome. The chain is Large ribosomal subunit protein uL14 from Kocuria rhizophila (strain ATCC 9341 / DSM 348 / NBRC 103217 / DC2201).